The chain runs to 906 residues: Inactive angiotensin-converting enzyme-related protein (906 aa).

The N-terminal stretch at 1–19 (MKFHILLLLLVGACLPVFT) is a signal peptide. Positions 28–95 (LLPADEAPKD…SPTPEPEPAI (68 aa)) are disordered. Basic and acidic residues predominate over residues 67–83 (PEPKPEPEPEPEPKPEP). A glycan (N-linked (GlcNAc...) asparagine) is linked at N159. The 591-residue stretch at 175 to 765 (IKDEEKLRSW…EIDQVVVGWD (591 aa)) folds into the Peptidase M2 domain. Residues C289 and C297 are joined by a disulfide bond. N653 carries N-linked (GlcNAc...) asparagine glycosylation. Residues 862 to 882 (VTTPEPSAEPEPTAKTTTKMP) form a disordered region. The segment covering 863–882 (TTPEPSAEPEPTAKTTTKMP) has biased composition (low complexity).

The protein belongs to the peptidase M2 family. Expressed in the hypodermis, in the vulva during organogenesis, and in the ray papillae of the male tail.

Inactive as a metallopeptidase, due to a lack of active site residues. Required for larval molting, male tail development, and formation of adult alae. Acts in the heterochronic pathway and plays a role in the developmental timing of postembryonic hypodermal seam cell division and adult alae production. Acts synergistically with apl-1 in let-7 regulated postembryonic cell division events. Might act downstream of the heterochronic protein lin-41. Negative regulator of lifespan, heat and oxidative stress response and age-related degenerative changes like reduced pharyngeal pumping and decreased body movements. Lifespan restriction is dependent on the forkhead-type transcription factor daf-16. The chain is Inactive angiotensin-converting enzyme-related protein from Caenorhabditis elegans.